A 350-amino-acid polypeptide reads, in one-letter code: MEVPNVKDFQWKRLAPLPSRRVYCSLLETGGQVYAIGGCDDNGVPMDCFEVYSPEADQWTALPRLPTARAGVAVTALGKRIMVIGGVGTNQLPLKVVEMYNIDEGKWKKRSMLREAAMGISVTAKDYRVYAAGGMGLDLRPHNHLQHYDMLKDMWVSLAPMPTPRYAATSFLRGSKIYVLGGRQSKYAVNAFEVFDIETRSWTKFPNIPYKRAFSSFVTLDNHLYSLGGLRQGRLYRQPKFLRTMDVFDMEQGGWLKMERSFFLKKRRADFVAGSLSGRVIVAGGLGNQPTVLETAEAFHPGKNKWEILPAMPTPRCACSSIVVKNCLLAVGGVNQGLSDAVEALCVSDS.

7 Kelch repeats span residues 1–31 (MEVP…ETGG), 32–79 (QVYA…ALGK), 81–127 (IMVI…AKDY), 128–175 (RVYA…LRGS), 176–222 (KIYV…TLDN), 224–278 (LYSL…SLSG), and 279–326 (RVIV…VVKN).

In Homo sapiens (Human), this protein is Kelch domain-containing protein 8A (KLHDC8A).